Reading from the N-terminus, the 156-residue chain is Ribosomal RNA large subunit methyltransferase H (156 aa).

S-adenosyl-L-methionine contacts are provided by residues Leu72, Gly104, and 123 to 128; that span reads LGPMTF.

This sequence belongs to the RNA methyltransferase RlmH family. In terms of assembly, homodimer.

It localises to the cytoplasm. The enzyme catalyses pseudouridine(1915) in 23S rRNA + S-adenosyl-L-methionine = N(3)-methylpseudouridine(1915) in 23S rRNA + S-adenosyl-L-homocysteine + H(+). Its function is as follows. Specifically methylates the pseudouridine at position 1915 (m3Psi1915) in 23S rRNA. The sequence is that of Ribosomal RNA large subunit methyltransferase H from Nitratidesulfovibrio vulgaris (strain ATCC 29579 / DSM 644 / CCUG 34227 / NCIMB 8303 / VKM B-1760 / Hildenborough) (Desulfovibrio vulgaris).